A 143-amino-acid polypeptide reads, in one-letter code: Myosin 1 light chain cam2 (143 aa).

EF-hand domains lie at 6–41, 75–110, and 111–143; these read EQTDEMKEAFVLYDIDKDGLIPTSHVGSVLRSLGIN, ESEEEYIKAFRVFDKDNSGYIETAKFADYMKTLGEK, and LSDNEVQLMVQEADPTNSGSFDYYDFVQRIMAK.

This sequence belongs to the calmodulin family. As to quaternary structure, interacts with myo1 and pik1.

It localises to the cytoplasm. The protein resides in the prospore membrane. Plays a role in meiosis and sporulation. The polypeptide is Myosin 1 light chain cam2 (Schizosaccharomyces pombe (strain 972 / ATCC 24843) (Fission yeast)).